The chain runs to 163 residues: uncharacterized protein (163 aa).

2 disordered regions span residues 1-78 (MHSL…NPHS) and 115-163 (PKWL…LPCH).

This is an uncharacterized protein from Homo sapiens (Human).